Reading from the N-terminus, the 98-residue chain is Small ribosomal subunit protein uS19 (98 aa).

This sequence belongs to the universal ribosomal protein uS19 family.

In terms of biological role, protein S19 forms a complex with S13 that binds strongly to the 16S ribosomal RNA. This chain is Small ribosomal subunit protein uS19, found in Chlorobaculum tepidum (strain ATCC 49652 / DSM 12025 / NBRC 103806 / TLS) (Chlorobium tepidum).